Here is a 572-residue protein sequence, read N- to C-terminus: Far upstream element-binding protein 3 (572 aa).

Ala-2 carries the post-translational modification N-acetylalanine. Residues Lys-15 and Lys-57 each participate in a glycyl lysine isopeptide (Lys-Gly) (interchain with G-Cter in SUMO2) cross-link. At Thr-76 the chain carries Phosphothreonine. KH domains are found at residues 77-141, 162-228, 253-317, and 354-421; these read VITE…KRLL, STIQ…REMV, GGSI…AHII, and VQEI…RQLI. Ser-296 is subject to Phosphoserine. A disordered region spans residues 426-521; it reads GGTNLGAPGA…SQPNYSKAWE (96 aa). Low complexity predominate over residues 496–514; the sequence is QQPTQQVPSQQSQPQSSQP. A phosphoserine mark is found at Ser-539 and Ser-569.

Detected in a number of cell lines.

The protein resides in the nucleus. Its function is as follows. May interact with single-stranded DNA from the far-upstream element (FUSE). May activate gene expression. This is Far upstream element-binding protein 3 (FUBP3) from Homo sapiens (Human).